Consider the following 450-residue polypeptide: Crinkler effector protein 63 (450 aa).

An N-terminal signal peptide occupies residues 1–17 (MVKLFCAIVGAAGSAFP). The LQLFLAK domain stretch occupies residues 18–55 (VDIDAGQSAGDLKDAIKAKNPATITCDAKDLQLSLAKT). Residues 58 to 117 (GAWLPDDDQAALDLEDGKVHEDIQALIDGEKMKATWTIEDVLTANNMTKRKGRAPKSRQI) form a DWL domain region. N-linked (GlcNAc...) asparagine glycosylation occurs at Asn-103. The short motif at 118–124 (HVLVVVP) is the HVLVXXP motif element. The segment at 125-450 (EGAFGSASET…RSIPTFSYFS (326 aa)) is effector domain. The short motif at 218-224 (QRKRYRR) is the Nuclear localization signal (NLS) element. Asn-342 carries N-linked (GlcNAc...) asparagine glycosylation.

It belongs to the Crinkler effector family. In terms of assembly, forms a homodimer via an inverted association manner. Forms heterodimers with CRN79 and CRN115.

Its subcellular location is the secreted. It localises to the host nucleus. It is found in the host nucleoplasm. In terms of biological role, secreted effector that, with CRN115, is critical to pathogenesis by modulating host defenses. Induces cell death in plant host cells. Suppresses callose deposition and affects expression of defense-related genes including two salicylic acid (SA) signal-induced and antimicrobial PR genes (PR1 and PR2), and genes involved in jasmonic acid (JA)/ethylene (ET)-mediated defense pathway (ERF1, ORA59, PDF1.2). CRN115 and CRN63 may share the same molecular host targets that are involved in the cell death signal transduction pathway and that their differential activities are dependent on plant nuclear localization or not. Does not affect MAPK activation and BIK1 phosphorylation and acts downstream of the MAPK cascades in PTI signaling. This is Crinkler effector protein 63 from Phytophthora sojae (strain P6497) (Soybean stem and root rot agent).